The following is a 410-amino-acid chain: Elongation factor Tu, chloroplastic (410 aa).

A tr-type G domain is found at 10–215 (KPHINIGTIG…MVDKYFPTPE (206 aa)). The tract at residues 19–26 (GHVDHGKT) is G1. Residue 19 to 26 (GHVDHGKT) participates in GTP binding. T26 serves as a coordination point for Mg(2+). Residues 61-65 (GITIN) form a G2 region. Positions 82–85 (DCPG) are G3. Residues 82 to 86 (DCPGH) and 137 to 140 (NKAD) contribute to the GTP site. The segment at 137–140 (NKAD) is G4. The segment at 175–177 (SAL) is G5.

This sequence belongs to the TRAFAC class translation factor GTPase superfamily. Classic translation factor GTPase family. EF-Tu/EF-1A subfamily.

It localises to the plastid. The protein resides in the chloroplast. The catalysed reaction is GTP + H2O = GDP + phosphate + H(+). Functionally, GTP hydrolase that promotes the GTP-dependent binding of aminoacyl-tRNA to the A-site of ribosomes during protein biosynthesis. The protein is Elongation factor Tu, chloroplastic (tufA) of Cyanidium caldarium (Red alga).